We begin with the raw amino-acid sequence, 355 residues long: uncharacterized protein (355 aa).

Disordered stretches follow at residues 1 to 121 (MPID…MELR), 226 to 253 (RLMN…KSSM), and 336 to 355 (NLHR…RKRT). Residues 24 to 37 (LESESSSESDYEEV) are compositionally biased toward acidic residues. Polar residues predominate over residues 65–87 (ETKTSSNFQNINPVQTIDNSASE). Residues 91–105 (DASSAEGGSNSAASS) are compositionally biased toward low complexity. Residues 106–117 (SEEEDSSDSEYE) show a composition bias toward acidic residues. The segment covering 226–245 (RLMNSEEREAQDLKDAEASR) has biased composition (basic and acidic residues).

This is an uncharacterized protein from Schizosaccharomyces pombe (strain 972 / ATCC 24843) (Fission yeast).